We begin with the raw amino-acid sequence, 171 residues long: Co-chaperone protein HscB (171 aa).

The J domain maps to 2-74 (DYFTLFGLPA…LMRAEYLLSL (73 aa)).

This sequence belongs to the HscB family. As to quaternary structure, interacts with HscA and stimulates its ATPase activity. Interacts with IscU.

Its function is as follows. Co-chaperone involved in the maturation of iron-sulfur cluster-containing proteins. Seems to help targeting proteins to be folded toward HscA. This is Co-chaperone protein HscB from Shigella flexneri serotype 5b (strain 8401).